The chain runs to 257 residues: Imidazole glycerol phosphate synthase subunit HisF (257 aa).

Active-site residues include D11 and D130.

This sequence belongs to the HisA/HisF family. Heterodimer of HisH and HisF.

It is found in the cytoplasm. It carries out the reaction 5-[(5-phospho-1-deoxy-D-ribulos-1-ylimino)methylamino]-1-(5-phospho-beta-D-ribosyl)imidazole-4-carboxamide + L-glutamine = D-erythro-1-(imidazol-4-yl)glycerol 3-phosphate + 5-amino-1-(5-phospho-beta-D-ribosyl)imidazole-4-carboxamide + L-glutamate + H(+). Its pathway is amino-acid biosynthesis; L-histidine biosynthesis; L-histidine from 5-phospho-alpha-D-ribose 1-diphosphate: step 5/9. Its function is as follows. IGPS catalyzes the conversion of PRFAR and glutamine to IGP, AICAR and glutamate. The HisF subunit catalyzes the cyclization activity that produces IGP and AICAR from PRFAR using the ammonia provided by the HisH subunit. In Prochlorococcus marinus (strain MIT 9515), this protein is Imidazole glycerol phosphate synthase subunit HisF.